The following is a 314-amino-acid chain: Ribosomal RNA small subunit methyltransferase H (314 aa).

Residues 32–34 (GGH), aspartate 52, phenylalanine 79, aspartate 100, and glutamine 107 each bind S-adenosyl-L-methionine.

The protein belongs to the methyltransferase superfamily. RsmH family.

Its subcellular location is the cytoplasm. The catalysed reaction is cytidine(1402) in 16S rRNA + S-adenosyl-L-methionine = N(4)-methylcytidine(1402) in 16S rRNA + S-adenosyl-L-homocysteine + H(+). Specifically methylates the N4 position of cytidine in position 1402 (C1402) of 16S rRNA. In Shouchella clausii (strain KSM-K16) (Alkalihalobacillus clausii), this protein is Ribosomal RNA small subunit methyltransferase H.